Consider the following 236-residue polypeptide: uncharacterized protein (236 aa).

An ABC transporter domain is found at 4-225; the sequence is LLEASIEQAG…TGLEGQSLLD (222 aa). 38 to 45 serves as a coordination point for ATP; the sequence is GANGAGKS.

This sequence belongs to the ABC transporter superfamily.

This is an uncharacterized protein from Bacillus subtilis (strain 168).